Reading from the N-terminus, the 402-residue chain is Calcium-responsive transactivator (402 aa).

The interval 1–148 (MSVAFASARP…TLPTTSMSMS (148 aa)) is N-terminal auto-inhibitory domain; necessary for interaction with SMARCA4/BRG1. The SH2-binding signature appears at 50–53 (YQQI). Disordered stretches follow at residues 72–129 (QSLL…GPNH), 141–170 (PTTS…SVPL), 195–250 (MHQQ…SSQQ), 262–290 (QYGH…YQPA), and 305–402 (TQHY…NYQQ). The span at 92 to 106 (QSGSAQGLHSQGSLS) shows a compositional bias: low complexity. Over residues 117-129 (SLMQAQIGNGPNH) the composition is skewed to polar residues. Positions 149 to 237 (GSGHGSGPGY…GGGVMGQRPM (89 aa)) are methionine-rich intra-molecular domain. A compositionally biased stretch (low complexity) spans 196 to 224 (HQQAASSHYSAAQGGSQHYQGQSMAMMGQ). An MFD domain region spans residues 251–323 (YLGQEEYYGG…SQYSQQQTGY (73 aa)). Composition is skewed to low complexity over residues 311 to 379 (GGNS…RASQ) and 390 to 402 (YGYE…NYQQ). Residues 340–402 (NQQSYPGQQQ…EQGQYGNYQQ (63 aa)) form a necessary for nuclear localization region. The short motif at 359 to 362 (SQYS) is the SH2-binding element. The SH3-binding signature appears at 377–385 (ASQTGPSTQ). A necessary for interaction with CREBBP and for the recruitment of CREBBP to the nuclear bodies region spans residues 393-402 (EQGQYGNYQQ). Residues 397 to 400 (YGNY) carry the SH2-binding motif.

This sequence belongs to the SS18 family. As to quaternary structure, homodimer. Dimerization may be necessary for its function in neuronal dendritic development. Interacts (via C-terminus) with CREBBP (via N-terminus), EP300 and SMARCA4/BRG1. Interacts with the nBAF complex. Association with CREBBP facilitates transcription while the association with SMARCA4/BRG1 suppresses CREST-mediated transcription in resting neurons.

The protein localises to the nucleus. Its subcellular location is the chromosome. The protein resides in the centromere. It is found in the kinetochore. In terms of biological role, transcriptional activator which is required for calcium-dependent dendritic growth and branching in cortical neurons. Recruits CREB-binding protein (CREBBP) to nuclear bodies. Component of the CREST-BRG1 complex, a multiprotein complex that regulates promoter activation by orchestrating a calcium-dependent release of a repressor complex and a recruitment of an activator complex. In resting neurons, transcription of the c-FOS promoter is inhibited by BRG1-dependent recruitment of a phospho-RB1-HDAC1 repressor complex. Upon calcium influx, RB1 is dephosphorylated by calcineurin, which leads to release of the repressor complex. At the same time, there is increased recruitment of CREBBP to the promoter by a CREST-dependent mechanism, which leads to transcriptional activation. The CREST-BRG1 complex also binds to the NR2B promoter, and activity-dependent induction of NR2B expression involves a release of HDAC1 and recruitment of CREBBP. The polypeptide is Calcium-responsive transactivator (SS18L1) (Bos taurus (Bovine)).